Consider the following 294-residue polypeptide: Beta-lactamase (294 aa).

The signal sequence occupies residues 1–30 (MKHSSLRRSLLLAGITLPLVSFALPAWANA). Catalysis depends on S75, which acts as the Acyl-ester intermediate. Substrate is bound at residue 239-241 (KTG).

The protein belongs to the class-A beta-lactamase family.

It carries out the reaction a beta-lactam + H2O = a substituted beta-amino acid. The polypeptide is Beta-lactamase (blaA) (Yersinia enterocolitica).